The primary structure comprises 645 residues: uncharacterized protein (645 aa).

The signal sequence occupies residues 1–23 (MPSSHRLSATILIFLSLTYISSS). 2 disordered regions span residues 30 to 58 (ITDK…TTAS) and 92 to 129 (NSNA…AGIP). A compositionally biased stretch (polar residues) spans 92-102 (NSNANPYFSTT). The N-linked (GlcNAc...) asparagine glycan is linked to Asn107. The segment covering 107 to 119 (NRSDSSQKARDPD) has biased composition (basic and acidic residues). The 80-residue stretch at 135 to 214 (CFRRYENSII…QTRDYFEPTD (80 aa)) folds into the PAN 1 domain. 2 disulfide bridges follow: Cys161–Cys187 and Cys165–Cys175. Positions 225 to 247 (ESSSSAPSSEDEDSPPSPPPSAP) are disordered. 2 PAN domains span residues 281–369 (CPRG…EKIC) and 378–465 (CPST…EVEC). 6 disulfides stabilise this stretch: Cys281–Cys369, Cys313–Cys341, Cys317–Cys329, Cys378–Cys465, Cys407–Cys436, and Cys411–Cys422. The N-linked (GlcNAc...) asparagine glycan is linked to Asn421. Basic and acidic residues predominate over residues 556–567 (AGELENNDHEQI). The segment at 556-582 (AGELENNDHEQIEDNNTDASEDPVPTK) is disordered. N-linked (GlcNAc...) asparagine glycosylation is present at Asn570.

This is an uncharacterized protein from Caenorhabditis elegans.